A 147-amino-acid polypeptide reads, in one-letter code: Small ribosomal subunit protein bS6m (147 aa).

The protein belongs to the bacterial ribosomal protein bS6 family. In terms of assembly, component of the mitochondrial ribosome small subunit (28S) which comprises a 12S rRNA and about 30 distinct proteins.

It localises to the mitochondrion. The protein is Small ribosomal subunit protein bS6m (mRpS6) of Drosophila melanogaster (Fruit fly).